A 1168-amino-acid polypeptide reads, in one-letter code: Transcription-repair-coupling factor (1168 aa).

The region spanning 633–794 (DMQKSRPMDR…MLGVRDLSVI (162 aa)) is the Helicase ATP-binding domain. 646–653 (GDVGYGKT) serves as a coordination point for ATP. Positions 747–750 (DEEQ) match the DEEQ box motif. Positions 808-969 (VLEQNMSFIK…GFKIAMRDLN (162 aa)) constitute a Helicase C-terminal domain.

The protein in the N-terminal section; belongs to the UvrB family. This sequence in the C-terminal section; belongs to the helicase family. RecG subfamily.

It localises to the cytoplasm. In terms of biological role, couples transcription and DNA repair by recognizing RNA polymerase (RNAP) stalled at DNA lesions. Mediates ATP-dependent release of RNAP and its truncated transcript from the DNA, and recruitment of nucleotide excision repair machinery to the damaged site. The protein is Transcription-repair-coupling factor of Staphylococcus aureus (strain MRSA252).